A 1623-amino-acid chain; its full sequence is ABC transporter C family member 2 (1623 aa).

9 helical membrane-spanning segments follow: residues 37–57, 76–96, 109–129, 145–165, 172–192, 336–356, 440–460, 527–547, and 557–577; these read FVLG…IWLA, FLAL…IMGI, FEAF…VMIL, FAVI…LSVK, VLYL…LLFM, AWMG…GVLC, VASL…TVII, FILN…FTLL, and FTSL…PNII. Positions 302–582 constitute an ABC transmembrane type-1 1 domain; that stretch reads FWWGGFWKIG…LPNIITQVVN (281 aa). In terms of domain architecture, ABC transporter 1 spans 614 to 838; it reads ISIRNGYFSW…GPLFQRLMEN (225 aa). Residue 649–656 coordinates ATP; that stretch reads GSTGEGKT. The interval 842 to 890 is disordered; it reads VEEYSEENGEAEADQTAEQPVANGNTNGLQMDGSDDKKSKEGNKKGGKS. Residues 845–856 are compositionally biased toward acidic residues; sequence YSEENGEAEADQ. Polar residues predominate over residues 857-870; sequence TAEQPVANGNTNGL. A compositionally biased stretch (basic and acidic residues) spans 875-885; that stretch reads SDDKKSKEGNK. 6 helical membrane-spanning segments follow: residues 914–934, 955–975, 1032–1054, 1058–1077, 1143–1163, and 1177–1197; these read ALGG…TEVF, GPLF…LVTL, AVFV…LIGI, LSLW…YLYY, LGIR…SFAV, and STMG…TGVL. The region spanning 921–1205 is the ABC transmembrane type-1 2 domain; sequence VMMLLLCYVL…VLRLASLAEN (285 aa). An interaction with calmodulin and FKP42/TWD1 region spans residues 1236-1251; sequence WPSSGSIKFEDVVLRY. One can recognise an ABC transporter 2 domain in the interval 1242–1476; it reads IKFEDVVLRY…EGSSFSKMVQ (235 aa). 1276–1283 contacts ATP; that stretch reads GRTGAGKS.

This sequence belongs to the ABC transporter superfamily. ABCC family. Conjugate transporter (TC 3.A.1.208) subfamily. As to quaternary structure, interacts with FKBP42/TWD1 and probably with calmodulin (CaM). In terms of tissue distribution, ubiquitous, at low levels.

The protein localises to the vacuole membrane. It catalyses the reaction ATP + H2O + xenobioticSide 1 = ADP + phosphate + xenobioticSide 2.. With respect to regulation, reciprocal promotion of DNP-GS and E(2)17betaG uptake. E(2)17betaG uptake is also stimulated by GSH and S-methyl-glutathione (S-methyl-GS), and, to a lower extent, by GSSG and C3G-GS. Metolachlor-GS and decyl-GS slightly inhibit E(2)17betaG uptake. Functionally, pump for glutathione S-conjugates. Mediates the transport of S-conjugates such as GSH, S-(2,4-dinitrophenyl)-glutathione (DNP-GS), GSSG, cyanidin 3-glucoside-GS (C3G-GS) and metolachlor-GS (MOC-GS), glucuronides such as 17-beta-estradiol 17-(beta-D-glucuronide) (E(2)17betaG), and of the chlorophyll catabolite such as B.napus nonfluorescent chlorophyll catabolite (Bn-NCC-1). This chain is ABC transporter C family member 2 (ABCC2), found in Arabidopsis thaliana (Mouse-ear cress).